A 105-amino-acid chain; its full sequence is Large ribosomal subunit protein eL36 (105 aa).

Residues 86-105 are disordered; the sequence is QAGKKKRDDIANINRKASAK.

Belongs to the eukaryotic ribosomal protein eL36 family.

The polypeptide is Large ribosomal subunit protein eL36 (rpl36) (Dictyostelium discoideum (Social amoeba)).